The following is a 272-amino-acid chain: Phosphate import ATP-binding protein PstB 2 (272 aa).

The ABC transporter domain occupies 26–267 (IEINNLCLNY…PIHKQTEDYI (242 aa)). 58-65 (GPSGCGKS) is an ATP binding site.

It belongs to the ABC transporter superfamily. Phosphate importer (TC 3.A.1.7) family. In terms of assembly, the complex is composed of two ATP-binding proteins (PstB), two transmembrane proteins (PstC and PstA) and a solute-binding protein (PstS).

Its subcellular location is the cell inner membrane. It catalyses the reaction phosphate(out) + ATP + H2O = ADP + 2 phosphate(in) + H(+). In terms of biological role, part of the ABC transporter complex PstSACB involved in phosphate import. Responsible for energy coupling to the transport system. The chain is Phosphate import ATP-binding protein PstB 2 from Aliivibrio fischeri (strain ATCC 700601 / ES114) (Vibrio fischeri).